The sequence spans 571 residues: Putative fatty-acid--CoA ligase fadD11 (571 aa).

Positions 1–19 are enriched in low complexity; that stretch reads MARLRGAGAAGRCRPGRFG. Disordered stretches follow at residues 1–35 and 67–91; these read MARLRGAGAAGRCRPGRFGSSARRHGLADDGEPDR and RQRGDQGGHLRATVRRSRSRQRCAH. Positions 78–91 are enriched in basic residues; it reads ATVRRSRSRQRCAH. 2 helical membrane-spanning segments follow: residues 314 to 334 and 431 to 451; these read TLAFFAGIGIPIAEIWGMSEL and ANIENTILAACPMVGVMMAIG.

It belongs to the ATP-dependent AMP-binding enzyme family.

The protein localises to the cell membrane. This Mycobacterium tuberculosis (strain CDC 1551 / Oshkosh) protein is Putative fatty-acid--CoA ligase fadD11 (fadD11).